Consider the following 40-residue polypeptide: Meleagrin (40 aa).

At Gln1 the chain carries Pyrrolidone carboxylic acid. Intrachain disulfides connect Cys6-Cys33, Cys12-Cys28, and Cys16-Cys32.

This sequence belongs to the transferrin family.

This chain is Meleagrin, found in Meleagris gallopavo (Wild turkey).